Reading from the N-terminus, the 678-residue chain is MFKKLFGQLQRIGKALMLPVAILPAAGLLLAIGTAMQGESLQHYLPFIQNGGIQSVAEMMTGAGGIIFDNLPMIFAMGVAIGLASGDGVAAIAAFVGYLVMNKTMGAFLHVSPDNVNDAASGYASVLGIPTLQTGVFGGIIIGALAAWCYNKFYNISLPSYLGFFAGKRFVPIMMATTSFILAFPMAWIWPSIQTGLNAFSEGLLDSNTGLAVFLFGFIKRLLIPFGLHHIFHAPFWFEFGAWKNAAGEMIHGDQRIFIEQIREGSKLTAGKFMQGEFPVMMFGLPAAALAIYHTAKPENKKVVAGLMGSAALTSFLTGITEPLEFSFLFVAPVLFFVHAILDGLSFLILYLLNVHLGYTFSGGFIDYVLLGVLPNKTQWWLVIPVGVVYAFIYYFVFRFLILKFKYKTPGREDKQAQFTNSSASELPFNVLKAMGGEENIKHLDACITRLRVEVKEKGKVDVAGLKALGASGVLEVGNNMQAIFGPKSDQIKHDMSLIMKGEITKPQETTVTEEESEEVVHIERASEVNIYAPGNGQVIPLSEVPDQVFAQKMMGDGVGFIPADGKIVAPFDGTVKTIFPTKHAIGLESDQGLELLIHIGIDTVKLNGEGFESFVETDDRVHKGQVLMQIDLDYITAHAPSTVTPLIITNLEDRQLSVEDVKDVTAEQLIIKVIDDK.

A PTS EIIC type-1 domain is found at 3-414 (KKLFGQLQRI…FKYKTPGRED (412 aa)). A run of 11 helical transmembrane segments spans residues 16–36 (LMLP…GTAM), 63–83 (AGGI…AIGL), 89–109 (VAAI…GAFL), 126–146 (VLGI…GALA), 170–190 (FVPI…AWIW), 211–231 (LAVF…LHHI), 273–293 (FMQG…LAIY), 303–323 (VVAG…ITEP), 329–349 (LFVA…SFLI), 355–375 (VHLG…GVLP), and 382–402 (LVIP…RFLI). Residues 425–506 (SELPFNVLKA…SLIMKGEITK (82 aa)) enclose the PTS EIIB type-1 domain. The active-site Phosphocysteine intermediate; for EIIB activity is the cysteine 447. In terms of domain architecture, PTS EIIA type-1 spans 547–651 (DQVFAQKMMG…STVTPLIITN (105 aa)). The active-site Tele-phosphohistidine intermediate; for EIIA activity is histidine 599.

The protein localises to the cell membrane. The catalysed reaction is N(pros)-phospho-L-histidyl-[protein] + D-glucose(out) = D-glucose 6-phosphate(in) + L-histidyl-[protein]. The phosphoenolpyruvate-dependent sugar phosphotransferase system (sugar PTS), a major carbohydrate active transport system, catalyzes the phosphorylation of incoming sugar substrates concomitantly with their translocation across the cell membrane. This system is involved in glucose transport. This is PTS system glucose-specific EIICBA component (ptsG) from Staphylococcus saprophyticus subsp. saprophyticus (strain ATCC 15305 / DSM 20229 / NCIMB 8711 / NCTC 7292 / S-41).